The chain runs to 208 residues: Fibroblast growth factor-binding protein 2 (208 aa).

The N-terminal stretch at 1–19 (MKRVALLFLVVICGMGGLG) is a signal peptide. 3 disulfides stabilise this stretch: C43–C59, C68–C102, and C77–C113. Residues 130 to 181 (EPEDGANRDKSSQKTSASVRGAGKSSVKKTGKPAVLPRIKPTQHGQGSENET) are disordered. An intrachain disulfide couples C191 to C199.

Belongs to the fibroblast growth factor-binding protein family.

It localises to the secreted. Its subcellular location is the extracellular space. The sequence is that of Fibroblast growth factor-binding protein 2 (FGFBP2) from Gallus gallus (Chicken).